The primary structure comprises 457 residues: Cysteine--tRNA ligase (457 aa).

Position 28 (cysteine 28) interacts with Zn(2+). The 'HIGH' region motif lies at 30–40 (ITVYDLCHIGH). 3 residues coordinate Zn(2+): cysteine 209, histidine 234, and glutamate 238. The 'KMSKS' region motif lies at 266 to 270 (KMSKS). Lysine 269 contacts ATP.

Belongs to the class-I aminoacyl-tRNA synthetase family. Monomer. Zn(2+) is required as a cofactor.

The protein resides in the cytoplasm. It carries out the reaction tRNA(Cys) + L-cysteine + ATP = L-cysteinyl-tRNA(Cys) + AMP + diphosphate. In Sodalis glossinidius (strain morsitans), this protein is Cysteine--tRNA ligase.